A 525-amino-acid chain; its full sequence is Cytochrome P450 703A2 (525 aa).

A helical membrane pass occupies residues 3-23; sequence PFLLSIILCSWIFVVVSWKKL. Cys455 lines the heme pocket.

The protein belongs to the cytochrome P450 family. It depends on heme as a cofactor.

It is found in the membrane. It catalyses the reaction dodecanoate + reduced [NADPH--hemoprotein reductase] + O2 = 7-hydroxydodecanoate + oxidized [NADPH--hemoprotein reductase] + H2O + H(+). In terms of biological role, involved in pollen exine and anther epicuticular layer development. Catalyzes the in-chain hydroxylation of lauric acid (C12:0) preferentially on position 7, generating 7-hydroxylated lauric acid. Does not possess activity with other fatty acids (C14:0, C16:0, C16:1, and C18:0). Participates in a conserved pathway of in-chain hydroxylation of lauric acid required for anther cuticle and pollen exine formation. Directly regulated by TDR, a known regulator of tapetum programmed cell death (PCD) and pollen exine formation. The chain is Cytochrome P450 703A2 from Oryza sativa subsp. japonica (Rice).